The primary structure comprises 607 residues: Elongation factor 4 (607 aa).

The region spanning 11–193 (SKIRNFSIIA…QIVEKVPAPA (183 aa)) is the tr-type G domain. Residues 23-28 (DHGKST) and 140-143 (NKID) each bind GTP.

Belongs to the TRAFAC class translation factor GTPase superfamily. Classic translation factor GTPase family. LepA subfamily.

The protein resides in the cell membrane. The catalysed reaction is GTP + H2O = GDP + phosphate + H(+). Its function is as follows. Required for accurate and efficient protein synthesis under certain stress conditions. May act as a fidelity factor of the translation reaction, by catalyzing a one-codon backward translocation of tRNAs on improperly translocated ribosomes. Back-translocation proceeds from a post-translocation (POST) complex to a pre-translocation (PRE) complex, thus giving elongation factor G a second chance to translocate the tRNAs correctly. Binds to ribosomes in a GTP-dependent manner. The protein is Elongation factor 4 of Bacillus cereus (strain ATCC 14579 / DSM 31 / CCUG 7414 / JCM 2152 / NBRC 15305 / NCIMB 9373 / NCTC 2599 / NRRL B-3711).